The following is a 72-amino-acid chain: uncharacterized protein (72 aa).

This is an uncharacterized protein from Vaccinia virus (strain Western Reserve) (VACV).